Consider the following 230-residue polypeptide: Secretory carrier-associated membrane protein 4 (230 aa).

Topologically, residues 1 to 39 (MAGKENNFPPLPPFLPLKPCFYQDFSDEIPVEHQVLVKR) are cytoplasmic. Helical transmembrane passes span 40–60 (IYRL…ACLA), 61–81 (WWIA…LVLF), 106–126 (MTFF…AIGF), and 149–169 (VVML…AVTI). Over 170-230 (VKVHRIYRGA…SYSSSGGHWP (61 aa)) the chain is Cytoplasmic. A Phosphothreonine modification is found at Thr-194.

The protein belongs to the SCAMP family.

It is found in the membrane. In terms of biological role, probably involved in membrane protein trafficking. In Mus musculus (Mouse), this protein is Secretory carrier-associated membrane protein 4 (Scamp4).